The primary structure comprises 115 residues: Large ribosomal subunit protein bL20 (115 aa).

Belongs to the bacterial ribosomal protein bL20 family.

Functionally, binds directly to 23S ribosomal RNA and is necessary for the in vitro assembly process of the 50S ribosomal subunit. It is not involved in the protein synthesizing functions of that subunit. This is Large ribosomal subunit protein bL20 from Prochlorococcus marinus (strain MIT 9313).